A 411-amino-acid polypeptide reads, in one-letter code: Putative ion-transport protein YfeO (411 aa).

The next 11 helical transmembrane spans lie at 9-29, 54-74, 99-119, 149-169, 186-206, 223-243, 258-278, 296-316, 322-342, 343-363, and 386-406; these read MLLLSLPALIIGVASSLVLIA, DSPFWIVGMLTLTGIVVGLII, ALPGLLLALIIGLAGGVSLGP, ILASAGTIGALFGTPVAAALI, LFAPLMAAAAGSLTTSLFFHP, IASGAIVAAIAIAAGMVAVWC, VLILGIGGFILGILGVIGGPL, LGAGDYFTLAVVKLAALVIAA, GGRIFPAVFIGAALGLMLHAH, VEAVPAAITVSCAILGLVLVV, and LLCIVMLPAWLLLAGKPLLAA.

It belongs to the chloride channel (TC 2.A.49) family.

The protein localises to the cell membrane. This chain is Putative ion-transport protein YfeO, found in Salmonella paratyphi A (strain ATCC 9150 / SARB42).